A 682-amino-acid polypeptide reads, in one-letter code: Potassium-transporting ATPase ATP-binding subunit (682 aa).

The next 4 helical transmembrane spans lie at 34 to 54 (PVMF…LAMV), 58 to 78 (IAGS…TVLF), 219 to 239 (IALT…TATL), and 254 to 274 (VLVA…LSAI). Asp-307 functions as the 4-aspartylphosphate intermediate in the catalytic mechanism. Residues Asp-344, Glu-348, 377–384 (FTAQSRMS), and Lys-395 each bind ATP. Mg(2+) is bound by residues Asp-518 and Asp-522. 3 consecutive transmembrane segments (helical) span residues 588–608 (FAII…LNVM), 616–636 (AILS…PLAL), and 662–682 (LVVP…LGLA).

This sequence belongs to the cation transport ATPase (P-type) (TC 3.A.3) family. Type IA subfamily. As to quaternary structure, the system is composed of three essential subunits: KdpA, KdpB and KdpC.

The protein localises to the cell inner membrane. It catalyses the reaction K(+)(out) + ATP + H2O = K(+)(in) + ADP + phosphate + H(+). Its function is as follows. Part of the high-affinity ATP-driven potassium transport (or Kdp) system, which catalyzes the hydrolysis of ATP coupled with the electrogenic transport of potassium into the cytoplasm. This subunit is responsible for energy coupling to the transport system and for the release of the potassium ions to the cytoplasm. The chain is Potassium-transporting ATPase ATP-binding subunit from Salmonella newport (strain SL254).